Consider the following 856-residue polypeptide: DNA mismatch repair protein MutS (856 aa).

ATP is bound at residue 607–614 (GPNMSGKS).

It belongs to the DNA mismatch repair MutS family.

This protein is involved in the repair of mismatches in DNA. It is possible that it carries out the mismatch recognition step. This protein has a weak ATPase activity. The protein is DNA mismatch repair protein MutS of Lactobacillus delbrueckii subsp. bulgaricus (strain ATCC BAA-365 / Lb-18).